The primary structure comprises 421 residues: Serine hydroxymethyltransferase (421 aa).

(6S)-5,6,7,8-tetrahydrofolate-binding positions include leucine 118 and 122 to 124; that span reads GHL. Lysine 226 is subject to N6-(pyridoxal phosphate)lysine. Glutamate 242 serves as a coordination point for (6S)-5,6,7,8-tetrahydrofolate.

The protein belongs to the SHMT family. In terms of assembly, homodimer. Requires pyridoxal 5'-phosphate as cofactor.

The protein localises to the cytoplasm. The catalysed reaction is (6R)-5,10-methylene-5,6,7,8-tetrahydrofolate + glycine + H2O = (6S)-5,6,7,8-tetrahydrofolate + L-serine. It functions in the pathway one-carbon metabolism; tetrahydrofolate interconversion. Its pathway is amino-acid biosynthesis; glycine biosynthesis; glycine from L-serine: step 1/1. Its function is as follows. Catalyzes the reversible interconversion of serine and glycine with tetrahydrofolate (THF) serving as the one-carbon carrier. This reaction serves as the major source of one-carbon groups required for the biosynthesis of purines, thymidylate, methionine, and other important biomolecules. Also exhibits THF-independent aldolase activity toward beta-hydroxyamino acids, producing glycine and aldehydes, via a retro-aldol mechanism. This chain is Serine hydroxymethyltransferase, found in Mycoplasmopsis synoviae (strain 53) (Mycoplasma synoviae).